The chain runs to 432 residues: ATP-dependent RNA helicase RhlB (432 aa).

The Q motif motif lies at 9–37; sequence QRFADLPLHAEVIQALNENGFEFCTPIQA. Residues 40-219 enclose the Helicase ATP-binding domain; that stretch reads LPVLLKAKDI…YDHMNDPEKV (180 aa). 53–60 provides a ligand contact to ATP; sequence AQTGTGKT. The short motif at 165–168 is the DEAD box element; sequence DEAD. The 148-residue stretch at 243–390 folds into the Helicase C-terminal domain; it reads KMRLLLTLME…VSRYDREALL (148 aa). The segment at 395–432 is disordered; it reads TPVKIHRKHPTSRTRDGAKGAHRSGGARPPRHRTRRPS. Positions 423-432 are enriched in basic residues; the sequence is PPRHRTRRPS.

Belongs to the DEAD box helicase family. RhlB subfamily. Component of the RNA degradosome, which is a multiprotein complex involved in RNA processing and mRNA degradation.

Its subcellular location is the cytoplasm. It carries out the reaction ATP + H2O = ADP + phosphate + H(+). Its function is as follows. DEAD-box RNA helicase involved in RNA degradation. Has RNA-dependent ATPase activity and unwinds double-stranded RNA. This chain is ATP-dependent RNA helicase RhlB, found in Shewanella denitrificans (strain OS217 / ATCC BAA-1090 / DSM 15013).